The primary structure comprises 80 residues: uncharacterized protein (80 aa).

The N-terminal stretch at 1–15 is a signal peptide; that stretch reads MVKLSFTLRFGDVWV.

This is an uncharacterized protein from Archaeoglobus fulgidus (strain ATCC 49558 / DSM 4304 / JCM 9628 / NBRC 100126 / VC-16).